The following is a 220-amino-acid chain: Thiamine-phosphate synthase (220 aa).

Residues 38–42 (QYRDK) and Asn70 each bind 4-amino-2-methyl-5-(diphosphooxymethyl)pyrimidine. 2 residues coordinate Mg(2+): Asp71 and Asp90. Residue Thr109 participates in 4-amino-2-methyl-5-(diphosphooxymethyl)pyrimidine binding. 135–137 (TVS) contacts 2-[(2R,5Z)-2-carboxy-4-methylthiazol-5(2H)-ylidene]ethyl phosphate. Lys138 contributes to the 4-amino-2-methyl-5-(diphosphooxymethyl)pyrimidine binding site. 2-[(2R,5Z)-2-carboxy-4-methylthiazol-5(2H)-ylidene]ethyl phosphate is bound by residues Gly171 and 191 to 192 (IS).

It belongs to the thiamine-phosphate synthase family. Mg(2+) serves as cofactor.

The catalysed reaction is 2-[(2R,5Z)-2-carboxy-4-methylthiazol-5(2H)-ylidene]ethyl phosphate + 4-amino-2-methyl-5-(diphosphooxymethyl)pyrimidine + 2 H(+) = thiamine phosphate + CO2 + diphosphate. The enzyme catalyses 2-(2-carboxy-4-methylthiazol-5-yl)ethyl phosphate + 4-amino-2-methyl-5-(diphosphooxymethyl)pyrimidine + 2 H(+) = thiamine phosphate + CO2 + diphosphate. It catalyses the reaction 4-methyl-5-(2-phosphooxyethyl)-thiazole + 4-amino-2-methyl-5-(diphosphooxymethyl)pyrimidine + H(+) = thiamine phosphate + diphosphate. It participates in cofactor biosynthesis; thiamine diphosphate biosynthesis; thiamine phosphate from 4-amino-2-methyl-5-diphosphomethylpyrimidine and 4-methyl-5-(2-phosphoethyl)-thiazole: step 1/1. Functionally, condenses 4-methyl-5-(beta-hydroxyethyl)thiazole monophosphate (THZ-P) and 2-methyl-4-amino-5-hydroxymethyl pyrimidine pyrophosphate (HMP-PP) to form thiamine monophosphate (TMP). In Agrobacterium fabrum (strain C58 / ATCC 33970) (Agrobacterium tumefaciens (strain C58)), this protein is Thiamine-phosphate synthase.